The following is a 365-amino-acid chain: Phosphate acyltransferase (365 aa).

It belongs to the PlsX family. As to quaternary structure, homodimer. Probably interacts with PlsY.

Its subcellular location is the cytoplasm. The enzyme catalyses a fatty acyl-[ACP] + phosphate = an acyl phosphate + holo-[ACP]. It participates in lipid metabolism; phospholipid metabolism. Its function is as follows. Catalyzes the reversible formation of acyl-phosphate (acyl-PO(4)) from acyl-[acyl-carrier-protein] (acyl-ACP). This enzyme utilizes acyl-ACP as fatty acyl donor, but not acyl-CoA. The polypeptide is Phosphate acyltransferase (Klebsiella pneumoniae subsp. pneumoniae (strain ATCC 700721 / MGH 78578)).